The sequence spans 434 residues: Ribitol-5-phosphate xylosyltransferase 1 (434 aa).

The Cytoplasmic portion of the chain corresponds to methionine 1 to lysine 7. A helical; Signal-anchor for type II membrane protein membrane pass occupies residues isoleucine 8–phenylalanine 28. Over phenylalanine 29–threonine 434 the chain is Extracellular.

This sequence belongs to the TMEM5 family.

It is found in the golgi apparatus membrane. The enzyme catalyses 3-O-[Rib-ol-P-Rib-ol-P-3-beta-D-GalNAc-(1-&gt;3)-beta-D-GlcNAc-(1-&gt;4)-(O-6-P-alpha-D-Man)]-Thr-[protein] + UDP-alpha-D-xylose = 3-O-[beta-D-Xyl-(1-&gt;4)-Rib-ol-P-Rib-ol-P-3-beta-D-GalNAc-(1-&gt;3)-beta-D-GlcNAc-(1-&gt;4)-(O-6-P-alpha-D-Man)]-Thr-[protein] + UDP + H(+). It participates in protein modification; protein glycosylation. Its function is as follows. Acts as a UDP-D-xylose:ribitol-5-phosphate beta1,4-xylosyltransferase, which catalyzes the transfer of UDP-D-xylose to ribitol 5-phosphate (Rbo5P) to form the Xylbeta1-4Rbo5P linkage on O-mannosyl glycan. Participates in the biosynthesis of the phosphorylated O-mannosyl trisaccharide (N-acetylgalactosamine-beta-3-N-acetylglucosamine-beta-4-(phosphate-6-)mannose), a carbohydrate structure present in alpha-dystroglycan (DAG1), which is required for binding laminin G-like domain-containing extracellular proteins with high affinity. The sequence is that of Ribitol-5-phosphate xylosyltransferase 1 (rxylt1) from Danio rerio (Zebrafish).